We begin with the raw amino-acid sequence, 1363 residues long: Spike glycoprotein (1363 aa).

Positions 1 to 13 (MFLILLISLPTAF) are cleaved as a signal peptide. Over 14-1307 (AVIGDLKCTT…GTYEYYVKWP (1294 aa)) the chain is Extracellular. The BetaCoV S1-NTD domain maps to 15-298 (VIGDLKCTTV…DFMSEIKCKT (284 aa)). Disulfide bonds link C21/C165, C160/C193, C172/C252, C286/C296, and C331/C356. N59 and N133 each carry an N-linked (GlcNAc...) asparagine; by host glycan. Residue N198 is glycosylated (N-linked (GlcNAc...) asparagine; by host). Residues 329–617 (PDCNIEAWLN…DVNSGTTCST (289 aa)) enclose the BetaCoV S1-CTD domain. N-linked (GlcNAc...) asparagine; by host glycosylation occurs at N359. 2 disulfide bridges follow: C374/C427 and C386/C615. N-linked (GlcNAc...) asparagine; by host glycans are attached at residues N437, N649, N676, N696, N714, N739, and N788. Fusion peptide regions lie at residues 914-935 (SAIE…VEAY) and 933-953 (EAYN…VQSY). N-linked (GlcNAc...) asparagine; by host glycosylation is present at N937. The cysteines at positions 938 and 949 are disulfide-linked. Positions 1014 to 1064 (QKLIANAFNNALGAIQEGFDATNSALVKIQAVVNANAEALNNLLQQLSNRF) are heptad repeat 1. Residues 1043–1087 (QAVVNANAEALNNLLQQLSNRFGAISSSLQEILSRLDALEAQAQI) adopt a coiled-coil conformation. Residues N1194, N1224, N1234, N1253, N1267, and N1288 are each glycosylated (N-linked (GlcNAc...) asparagine; by host). Residues 1258–1296 (APDLSLDYINVTFLDLQDEMNRLQEAIKVLNQSYINLKD) form a heptad repeat 2 region. Residues 1269–1297 (TFLDLQDEMNRLQEAIKVLNQSYINLKDI) adopt a coiled-coil conformation. A helical transmembrane segment spans residues 1308-1328 (WYVWLLIGFAGVAMLVLLFFI). Over 1329–1363 (CCCTGCGTSCFKKCGGCCDDYTGHQELVIKTSHED) the chain is Cytoplasmic. Residues 1359 to 1363 (TSHED) carry the KxHxx motif.

The protein belongs to the betacoronaviruses spike protein family. Homotrimer; each monomer consists of a S1 and a S2 subunit. The resulting peplomers protrude from the virus surface as spikes. Specific enzymatic cleavages in vivo yield mature proteins. The precursor is processed into S1 and S2 by host cell furin or another cellular protease to yield the mature S1 and S2 proteins. Additionally, a second cleavage leads to the release of a fusion peptide after viral attachment to host cell receptor. Post-translationally, the cytoplasmic Cys-rich domain is palmitoylated. Spike glycoprotein is digested within host endosomes.

Its subcellular location is the virion membrane. It is found in the host endoplasmic reticulum-Golgi intermediate compartment membrane. The protein resides in the host cell membrane. Functionally, attaches the virion to the cell membrane by interacting with host receptor, initiating the infection. Its function is as follows. Mediates fusion of the virion and cellular membranes by acting as a class I viral fusion protein. Under the current model, the protein has at least three conformational states: pre-fusion native state, pre-hairpin intermediate state, and post-fusion hairpin state. During viral and target cell membrane fusion, the coiled coil regions (heptad repeats) assume a trimer-of-hairpins structure, positioning the fusion peptide in close proximity to the C-terminal region of the ectodomain. The formation of this structure appears to drive apposition and subsequent fusion of viral and target cell membranes. In terms of biological role, acts as a viral fusion peptide which is unmasked following S2 cleavage occurring upon virus endocytosis. This chain is Spike glycoprotein, found in Bovine coronavirus (strain 98TXSF-110-ENT) (BCoV-ENT).